Here is a 402-residue protein sequence, read N- to C-terminus: MARTDQKPPCRGGCWGQPGHPNTGGAAAHPTYHPMGHRPRTCILLRGDQTTGGQAPSREISLGPWAAGTHFLAISTTPWGRKTPACISELPTSSGTAQPLANAVCEVQTVPGPGLRPQGTPAMRAPSHKGTPPTPNPWGPEQPQNRHKHPKKGVTGGPSPPPPAASRYGQTPGREPRVQAPGLGPCGRPASGRLLSLHLEKGDGKGTRQRIPLTDAAVGGDRTDIPSAIAAGPARTPDRHGLPIPGSTPTPMVGSGRLGAPVGRSGGGASARSSRPSCANVLLRADASLGTVLSVLWTGQLSRGWALLPPGDAGRHLETSVISAGVAAGIWLVEPGEAAQDPATRRTAPPRRTASPEPPAPGAPLPACPGRIPGAARFGPRSCPLGSPAVLAVTTGWSHRSV.

Disordered regions lie at residues 1–29 (MARTDQKPPCRGGCWGQPGHPNTGGAAAH), 109–255 (TVPG…MVGS), and 337–371 (EAAQDPATRRTAPPRRTASPEPPAPGAPLPACPGR). The span at 345–355 (RRTAPPRRTAS) shows a compositional bias: low complexity. Positions 356–367 (PEPPAPGAPLPA) are enriched in pro residues.

The protein is Proline-rich protein 25 (PRR25) of Homo sapiens (Human).